Consider the following 270-residue polypeptide: Protein ABHD14A (270 aa).

Residues 9-29 (LVVLGLVLLATVLLYLLLPSM) traverse the membrane as a helical; Signal-anchor for type II membrane protein segment. N-linked (GlcNAc...) asparagine glycosylation is present at asparagine 61. Catalysis depends on charge relay system residues serine 170 and aspartate 221. Asparagine 237 carries an N-linked (GlcNAc...) asparagine glycan. The active-site Charge relay system is the histidine 248.

It belongs to the AB hydrolase superfamily. ABHD14 family.

The protein localises to the cytoplasm. The protein resides in the membrane. Its function is as follows. Possible role in granule neuron development. This chain is Protein ABHD14A, found in Danio rerio (Zebrafish).